The following is a 979-amino-acid chain: MATQAYTELQAAPPPSQPPQAPPQAQPQPPPPPPPAAPQPPQPPTAAATPQPQYVTELQSPQPQAQPPGGQKQYVTELPAVPAPSQPTGAPTPSPAPQQYIVVTVSEGAMRASETVSEASPGSTASQTGVPTQVVQQVQGTQQRLLVQTSVQAKPGHVSPLQLTNIQVPQQALPTQRLVVQSAAPGSKGGQVSLTVHGTQQVHSPPEQSPVQANSSSSKTAGAPTGTVPQQLQVHGVQQSVPVTQERSVVQATPQAPKPGPVQPLTVQGLQPVHVAQEVQQLQQVPVPHVYSSQVQYVEGGDASYTASAIRSSTYSYPETPLYTQTASTSYYEAAGTATQVSTPATSQAVASSGSMPMYVSGSQVVASSTSTGAGASNSSGGGGSGGGGGGGGGGGGGGSGSTGGGGSGAGTYVIQGGYMLGSASQSYSHTTRASPATVQWLLDNYETAEGVSLPRSTLYCHYLLHCQEQKLEPVNAASFGKLIRSVFMGLRTRRLGTRGNSKYHYYGLRIKASSPLLRLMEDQQHMAMRGQPFSQKQRLKPIQKMEGMTNGVAVGQQPSTGLSDISAQVQQYQQFLDASRSLPDFTELDLQGKVLPEGVGPGDIKAFQVLYREHCEAIVDVMVNLQFTLVETLWKTFWRYNLSQPSEAPPLAVHDEAEKRLPKAILVLLSKFEPVLQWTKHCDNVLYQGLVEILIPDVLRPIPSALTQAIRNFAKSLESWLTHAMVNIPEEMLRVKVAAAGAFAQTLRRYTSLNHLAQAARAVLQNTAQINQMLSDLNRVDFANVQEQASWVCRCEDRVVQRLEQDFKVTLQQQNSLEQWAAWLDGVVSQVLKPYQGSAGFPKAAKLFLLKWSFYSSMVIRDLTLRSAASFGSFHLIRLLYDEYMYYLIEHRVAQAKGETPIAVMGEFANLATSLNPLDPDKDEEEEEEEESEDELPQDISLAAGGESPALGPETLEPPAKLARTDARGLFVQALPSS.

Disordered stretches follow at residues 1 to 136 (MATQ…QVVQ), 181 to 227 (QSAA…PTGT), and 370 to 405 (TSTG…STGG). A compositionally biased stretch (pro residues) spans 12-44 (APPPSQPPQAPPQAQPQPPPPPPPAAPQPPQPP). A compositionally biased stretch (low complexity) spans 45-73 (TAAATPQPQYVTELQSPQPQAQPPGGQKQ). Ser60 bears the Phosphoserine mark. Over residues 81–96 (VPAPSQPTGAPTPSPA) the composition is skewed to pro residues. Residues 114-126 (ETVSEASPGSTAS) show a composition bias toward polar residues. The span at 127–136 (QTGVPTQVVQ) shows a compositional bias: low complexity. Polar residues-rich tracts occupy residues 190–203 (GQVS…QQVH) and 209–220 (SPVQANSSSSKT). Positions 370–379 (TSTGAGASNS) are enriched in low complexity. Positions 380-405 (SGGGGSGGGGGGGGGGGGGGSGSTGG) are enriched in gly residues. Residues 438–513 (TVQWLLDNYE…YHYYGLRIKA (76 aa)) constitute a DNA-binding region (RFX-type winged-helix). The segment at 744-979 (FAQTLRRYTS…GLFVQALPSS (236 aa)) is necessary for dimerization. Positions 915-960 (SLNPLDPDKDEEEEEEEESEDELPQDISLAAGGESPALGPETLEPP) are disordered. Acidic residues predominate over residues 922–938 (DKDEEEEEEEESEDELP). A phosphoserine mark is found at Ser978 and Ser979.

Belongs to the RFX family. In terms of assembly, homodimer; binds DNA as a homodimer. Heterodimer; heterodimerizes with RFX2 and RFX3.

It localises to the nucleus. Regulatory factor essential for MHC class II genes expression. Binds to the X boxes of MHC class II genes. Also binds to an inverted repeat (ENH1) required for hepatitis B virus genes expression and to the most upstream element (alpha) of the RPL30 promoter. This Homo sapiens (Human) protein is MHC class II regulatory factor RFX1 (RFX1).